The chain runs to 304 residues: N-acetyl-D-glucosamine kinase (304 aa).

ATP-binding positions include 4-11 and 133-140; these read GFDMGGTK and GLGGGLVI. His-157, Cys-177, Cys-179, and Cys-184 together coordinate Zn(2+).

This sequence belongs to the ROK (NagC/XylR) family. NagK subfamily.

The enzyme catalyses N-acetyl-D-glucosamine + ATP = N-acetyl-D-glucosamine 6-phosphate + ADP + H(+). It participates in cell wall biogenesis; peptidoglycan recycling. Functionally, catalyzes the phosphorylation of N-acetyl-D-glucosamine (GlcNAc) derived from cell-wall degradation, yielding GlcNAc-6-P. This is N-acetyl-D-glucosamine kinase from Pectobacterium atrosepticum (strain SCRI 1043 / ATCC BAA-672) (Erwinia carotovora subsp. atroseptica).